The primary structure comprises 407 residues: Cysteine desulfurase (407 aa).

Residue lysine 226 is modified to N6-(pyridoxal phosphate)lysine. Residue cysteine 364 is the Cysteine persulfide intermediate of the active site.

This sequence belongs to the class-V pyridoxal-phosphate-dependent aminotransferase family. Csd subfamily. Homodimer. Interacts with SufE and the SufBCD complex composed of SufB, SufC and SufD. The interaction with SufE is required to mediate the direct transfer of the sulfur atom from the S-sulfanylcysteine. The cofactor is pyridoxal 5'-phosphate.

Its subcellular location is the cytoplasm. The enzyme catalyses (sulfur carrier)-H + L-cysteine = (sulfur carrier)-SH + L-alanine. The catalysed reaction is L-selenocysteine + AH2 = hydrogenselenide + L-alanine + A + H(+). The protein operates within cofactor biosynthesis; iron-sulfur cluster biosynthesis. Its function is as follows. Cysteine desulfurases mobilize the sulfur from L-cysteine to yield L-alanine, an essential step in sulfur metabolism for biosynthesis of a variety of sulfur-containing biomolecules. Component of the suf operon, which is activated and required under specific conditions such as oxidative stress and iron limitation. Acts as a potent selenocysteine lyase in vitro, that mobilizes selenium from L-selenocysteine. Selenocysteine lyase activity is however unsure in vivo. The polypeptide is Cysteine desulfurase (Pectobacterium atrosepticum (strain SCRI 1043 / ATCC BAA-672) (Erwinia carotovora subsp. atroseptica)).